We begin with the raw amino-acid sequence, 310 residues long: tRNA dimethylallyltransferase (310 aa).

Residue 13–20 coordinates ATP; the sequence is GPTASGKT. 15 to 20 provides a ligand contact to substrate; it reads TASGKT. Interaction with substrate tRNA stretches follow at residues 38 to 41, 162 to 166, 243 to 248, and 276 to 283; these read DSAL, QRLSR, RCVGYR, and KRQITWLR.

This sequence belongs to the IPP transferase family. In terms of assembly, monomer. Mg(2+) serves as cofactor.

The enzyme catalyses adenosine(37) in tRNA + dimethylallyl diphosphate = N(6)-dimethylallyladenosine(37) in tRNA + diphosphate. In terms of biological role, catalyzes the transfer of a dimethylallyl group onto the adenine at position 37 in tRNAs that read codons beginning with uridine, leading to the formation of N6-(dimethylallyl)adenosine (i(6)A). This Vibrio atlanticus (strain LGP32) (Vibrio splendidus (strain Mel32)) protein is tRNA dimethylallyltransferase.